We begin with the raw amino-acid sequence, 649 residues long: Protein PSK SIMULATOR 3 (649 aa).

Glycine 2 is lipidated: N-myristoyl glycine. The interval 18-43 (SGSSVADDGREPDFGHSQPNGQTSLI) is disordered.

Its subcellular location is the nucleus. Functionally, promotes plant growth, especially at the vegetative stage, probably via the regulation of phytosulfokine (PSK) signaling; PSK are peptide phytohormones acting as growth factors. Together with PSI2 and PSI3, required during vegetative growth and reproduction. May also have a function in carbohydrate metabolism. The polypeptide is Protein PSK SIMULATOR 3 (Arabidopsis thaliana (Mouse-ear cress)).